The primary structure comprises 178 residues: Protein modigliani (178 aa).

In terms of assembly, probably homodimerizes. Component of the MTV complex, composed of moi/modigliani, tea and ver/verrocchio. Interacts with ver/verrochio and tea (via C-terminus); the interactions are direct and require fully intact moi/modigliani and ver/verrocchio. The MTV complex is recruited to telomeres by the HipHop-HOAP complex, consisting of HipHop, cav/HOAP and Su(var)205/HP1 to form the terminin telomere-capping complex. Interacts with cav/HOAP and Su(var)205/HP1; the interactions are direct. Probably interacts with peo (via N-terminus and UBC domain).

Its subcellular location is the nucleus. It localises to the chromosome. It is found in the telomere. Its function is as follows. Part of the MTV complex that associates with the HipHop-HOAP complex to form the terminin telomere-capping complex involved in telomere maintenance and prevention of telomere fusion. Potentially functions downstream of mei-41/ATR. As part of the MTV complex binds single stranded DNA in a sequence-independent manner, protecting it from degradation. The protein is Protein modigliani of Drosophila melanogaster (Fruit fly).